Consider the following 313-residue polypeptide: NADH-ubiquinone oxidoreductase chain 1 (313 aa).

8 helical membrane-spanning segments follow: residues Leu7–Leu27, Ile73–Met93, Leu104–Gly124, Leu150–Phe170, Tyr175–Ala195, Leu226–Phe246, Asp250–Val270, and Met293–Phe313.

This sequence belongs to the complex I subunit 1 family.

Its subcellular location is the mitochondrion inner membrane. The catalysed reaction is a ubiquinone + NADH + 5 H(+)(in) = a ubiquinol + NAD(+) + 4 H(+)(out). In terms of biological role, core subunit of the mitochondrial membrane respiratory chain NADH dehydrogenase (Complex I) that is believed to belong to the minimal assembly required for catalysis. Complex I functions in the transfer of electrons from NADH to the respiratory chain. The immediate electron acceptor for the enzyme is believed to be ubiquinone. This Aedes aegypti (Yellowfever mosquito) protein is NADH-ubiquinone oxidoreductase chain 1.